Consider the following 293-residue polypeptide: Ribosomal protein L11 methyltransferase (293 aa).

S-adenosyl-L-methionine-binding residues include threonine 145, glycine 166, aspartate 188, and asparagine 230.

This sequence belongs to the methyltransferase superfamily. PrmA family.

The protein resides in the cytoplasm. It carries out the reaction L-lysyl-[protein] + 3 S-adenosyl-L-methionine = N(6),N(6),N(6)-trimethyl-L-lysyl-[protein] + 3 S-adenosyl-L-homocysteine + 3 H(+). Its function is as follows. Methylates ribosomal protein L11. In Escherichia coli O7:K1 (strain IAI39 / ExPEC), this protein is Ribosomal protein L11 methyltransferase.